A 509-amino-acid polypeptide reads, in one-letter code: MGLPWYRVHTVVLNDPGRLISVHLMHTALVAGWAGSMALYELAIYDPSDPVLNPMWRQGMFVLPFMARLGVTQSWGGWSVTGGTATDPGFWSFEGVAAAHIVLSGLLFLAAVWHWVYWDLELFRDPRTGEPALDLPKMFGIHLFLSGLLCFGFGAFHLTGLFGPGMWISDPYGVTGSVQPVAPEWGPDGFNPFNPGGVVAHHIAAGIVGIIAGLFHLTVRPPERLYKALRMGNIETVLSSSIAAVFFAAFVVAGTMWYGNATTPIELFGPTRYQWDQGYFHQEIERRVQSSVAQGASLSEAWSQIPEKLAFYDYVGNSPAKGGLFRTGPMVKGDGIAQSWQGHGVFKDAEGRELTVRRLPNFFETFPVILTDADGVVRADIPFRRAESKYSFEQSGVTVSFYGGDLDGKTFTDPADVKKYARKAQGGEIFEFDRETLNSDGVFRTSPRGWFTFGHAVFALLFFFGHLWHGARTIYRDVFAGVEADLEEQVEWGLFQKVGDKSTRVRKEA.

Helical transmembrane passes span 21-36, 101-115, 140-156, 203-218, 237-252, and 457-472; these read SVHLMHTALVAGWAGS, IVLSGLLFLAAVWHW, GIHLFLSGLLCFGFGAF, IAAGIVGIIAGLFHLT, VLSSSIAAVFFAAFVV, and VFALLFFFGHLWHGAR.

Belongs to the PsbB/PsbC family. PsbB subfamily. As to quaternary structure, PSII is composed of 1 copy each of membrane proteins PsbA, PsbB, PsbC, PsbD, PsbE, PsbF, PsbH, PsbI, PsbJ, PsbK, PsbL, PsbM, PsbT, PsbX, PsbY, PsbZ, Psb30/Ycf12, peripheral proteins PsbO, CyanoQ (PsbQ), PsbU, PsbV and a large number of cofactors. It forms dimeric complexes. Requires Binds multiple chlorophylls. PSII binds additional chlorophylls, carotenoids and specific lipids. as cofactor.

It is found in the cellular thylakoid membrane. One of the components of the core complex of photosystem II (PSII). It binds chlorophyll and helps catalyze the primary light-induced photochemical processes of PSII. PSII is a light-driven water:plastoquinone oxidoreductase, using light energy to abstract electrons from H(2)O, generating O(2) and a proton gradient subsequently used for ATP formation. This chain is Photosystem II CP47 reaction center protein, found in Nostoc sp. (strain PCC 7120 / SAG 25.82 / UTEX 2576).